The sequence spans 124 residues: Ribonuclease pancreatic (124 aa).

The segment covering 1-13 (KETAAAKFERQHM) has biased composition (basic and acidic residues). Residues 1-25 (KETAAAKFERQHMDSSTSSASSSNY) are disordered. Positions 7 and 10 each coordinate substrate. Histidine 12 (proton acceptor) is an active-site residue. 4 disulfides stabilise this stretch: cysteine 26/cysteine 84, cysteine 40/cysteine 95, cysteine 58/cysteine 110, and cysteine 65/cysteine 72. Substrate is bound by residues 41–45 (KPVNT), lysine 66, and arginine 85. Histidine 119 (proton donor) is an active-site residue.

The protein belongs to the pancreatic ribonuclease family. As to quaternary structure, monomer. Interacts with and forms tight 1:1 complexes with RNH1. Dimerization of two such complexes may occur. Interaction with RNH1 inhibits this protein. In terms of tissue distribution, pancreas.

The protein resides in the secreted. The enzyme catalyses an [RNA] containing cytidine + H2O = an [RNA]-3'-cytidine-3'-phosphate + a 5'-hydroxy-ribonucleotide-3'-[RNA].. It catalyses the reaction an [RNA] containing uridine + H2O = an [RNA]-3'-uridine-3'-phosphate + a 5'-hydroxy-ribonucleotide-3'-[RNA].. In terms of biological role, endonuclease that catalyzes the cleavage of RNA on the 3' side of pyrimidine nucleotides. Acts on single-stranded and double-stranded RNA. The polypeptide is Ribonuclease pancreatic (RNASE1) (Tragelaphus oryx (Eland)).